The chain runs to 370 residues: Aldo-keto reductase dtxS3 (370 aa).

Asp78 is a binding site for NADP(+). The Proton donor role is filled by Tyr83. His174 provides a ligand contact to substrate. NADP(+)-binding positions include 204 to 205, Gln230, 259 to 269, and 333 to 341; these read SS, GPLASGRLARR, and GSVGRIEEA.

It belongs to the aldo/keto reductase family.

It participates in secondary metabolite biosynthesis. Its function is as follows. Aldo-keto reductase; part of the gene cluster that mediates the biosynthesis of destruxins, insecticidal cyclic hexadepsipeptides which induce flaccid paralysis and visceral muscle contraction in insects through targeting the calcium channels and vacuolar-type ATPases. The aldo-keto reductase dtxS3 converts alpha-ketoisocaproic acid from deaminated leucine into alpha-hydroxyisocaproic acid (HIC), which is the first substrate for destruxin assembly by dtxS1. L-aspartate decarboxylase dtxS4 converts aspartic acid into beta-alanine, the last substrate for the destruxin assembly line performed by dtxS1. The nonribosomal peptide synthetase dtxS1 synthesizes destruxins B and B2, whereas the cytochrome P450 monooxygenase dtxS2 is required to convert destruxin B into other destruxin derivatives, including destructins C, D, A and E. Destruxin E-diol (ED) is further produced in a non-enzymatic manner from destruxin E. Destruxins play an important role in virulence and escape from insect host immune defenses. The chain is Aldo-keto reductase dtxS3 from Metarhizium robertsii (strain ARSEF 23 / ATCC MYA-3075) (Metarhizium anisopliae (strain ARSEF 23)).